Here is a 207-residue protein sequence, read N- to C-terminus: Partner of Y14 and mago (207 aa).

Disordered regions lie at residues 1–28 and 52–133; these read MSTYLQSSEGKFIPATKRPDGTWRKARR and QRQA…NSIS. Positions 64-91 form a coiled coil; sequence LLAAESKKEREKQERTRAKKQEKESGRQ. Basic and acidic residues predominate over residues 68 to 90; it reads ESKKEREKQERTRAKKQEKESGR. The span at 123-133 shows a compositional bias: polar residues; that stretch reads PSGSRDINSIS. Residues 152 to 184 are a coiled coil; that stretch reads AKQLKKLRKKIREIEQIESRIQAGEQKKLDKDQ.

It belongs to the pym family. As to quaternary structure, interacts (via N-terminus) with mago and tsu/RBM8A; the interaction is direct. In terms of tissue distribution, expression detected in the ovary. In the oocyte expressed in the germarium, nurse cell and follicle cell.

The protein localises to the cytoplasm. Its subcellular location is the nucleus. In terms of biological role, regulator of the exon junction complex (EJC), a multiprotein complex that associates immediately upstream of the exon-exon junction on mRNAs and serves as a positional landmark for the intron exon structure of genes and directs post-transcriptional processes in the cytoplasm such as mRNA export, nonsense-mediated mRNA decay (NMD) or translation. Acts as an EJC disassembly factor by disrupting mature EJC from spliced mRNAs. Required for normal localization of osk mRNA to the posterior pole of the developing oocyte. Does not interact with the small ribosomal unit or components of the translation initiation complex. May not function in cap-dependent translation regulation. The protein is Partner of Y14 and mago of Drosophila melanogaster (Fruit fly).